We begin with the raw amino-acid sequence, 747 residues long: ATPase family gene 2 protein homolog B (747 aa).

An N-acetylmethionine modification is found at Met1. Residues 234–241 (GPPGVGKT) and 500–507 (GPPGCAKT) each bind ATP.

The protein belongs to the AAA ATPase family. AFG2 subfamily. Part of the 55LCC heterohexameric ATPase complex composed at least of AIRIM, AFG2A, AFG2B and CINP. Associates with pre-60S ribosomal particles. In terms of tissue distribution, in adult ear, expressed at low levels in neurosensory hair cells (inner and outer) and supporting cells (pillar and Deiter cells).

The protein localises to the cytoplasm. Its subcellular location is the cytoskeleton. The protein resides in the spindle. It is found in the nucleus. It catalyses the reaction ATP + H2O = ADP + phosphate + H(+). Its activity is regulated as follows. In the context of 55LCC heterohexameric ATPase complex, the ATPase activity is stimulated by DNA binding and inhibited in presence of RNA. ATP-dependent chaperone part of the 55LCC heterohexameric ATPase complex which is chromatin-associated and promotes replisome proteostasis to maintain replication fork progression and genome stability. Required for replication fork progression, sister chromatid cohesion, and chromosome stability. The ATPase activity is specifically enhanced by replication fork DNA and is coupled to cysteine protease-dependent cleavage of replisome substrates in response to replication fork damage. Uses ATPase activity to process replisome substrates in S-phase, facilitating their proteolytic turnover from chromatin to ensure DNA replication and mitotic fidelity. Plays an essential role in the cytoplasmic maturation steps of pre-60S ribosomal particles by promoting the release of shuttling protein RSL24D1/RLP24 from the pre-ribosomal particles. This chain is ATPase family gene 2 protein homolog B (Afg2b), found in Mus musculus (Mouse).